Reading from the N-terminus, the 434-residue chain is Enolase (434 aa).

Gln163 lines the (2R)-2-phosphoglycerate pocket. Catalysis depends on Glu205, which acts as the Proton donor. Mg(2+) contacts are provided by Asp242, Glu289, and Asp316. (2R)-2-phosphoglycerate-binding residues include Lys341, Arg370, Ser371, and Lys392. The Proton acceptor role is filled by Lys341.

The protein belongs to the enolase family. Mg(2+) is required as a cofactor.

It localises to the cytoplasm. Its subcellular location is the secreted. It is found in the cell surface. The enzyme catalyses (2R)-2-phosphoglycerate = phosphoenolpyruvate + H2O. Its pathway is carbohydrate degradation; glycolysis; pyruvate from D-glyceraldehyde 3-phosphate: step 4/5. Its function is as follows. Catalyzes the reversible conversion of 2-phosphoglycerate (2-PG) into phosphoenolpyruvate (PEP). It is essential for the degradation of carbohydrates via glycolysis. This is Enolase from Lacticaseibacillus paracasei (strain ATCC 334 / BCRC 17002 / CCUG 31169 / CIP 107868 / KCTC 3260 / NRRL B-441) (Lactobacillus paracasei).